The sequence spans 173 residues: Crossover junction endodeoxyribonuclease RuvC (173 aa).

Residues Asp-8, Glu-67, and Asp-139 contribute to the active site. The Mg(2+) site is built by Asp-8, Glu-67, and Asp-139.

Belongs to the RuvC family. As to quaternary structure, homodimer which binds Holliday junction (HJ) DNA. The HJ becomes 2-fold symmetrical on binding to RuvC with unstacked arms; it has a different conformation from HJ DNA in complex with RuvA. In the full resolvosome a probable DNA-RuvA(4)-RuvB(12)-RuvC(2) complex forms which resolves the HJ. Mg(2+) is required as a cofactor.

It is found in the cytoplasm. The enzyme catalyses Endonucleolytic cleavage at a junction such as a reciprocal single-stranded crossover between two homologous DNA duplexes (Holliday junction).. The RuvA-RuvB-RuvC complex processes Holliday junction (HJ) DNA during genetic recombination and DNA repair. Endonuclease that resolves HJ intermediates. Cleaves cruciform DNA by making single-stranded nicks across the HJ at symmetrical positions within the homologous arms, yielding a 5'-phosphate and a 3'-hydroxyl group; requires a central core of homology in the junction. The consensus cleavage sequence is 5'-(A/T)TT(C/G)-3'. Cleavage occurs on the 3'-side of the TT dinucleotide at the point of strand exchange. HJ branch migration catalyzed by RuvA-RuvB allows RuvC to scan DNA until it finds its consensus sequence, where it cleaves and resolves the cruciform DNA. The sequence is that of Crossover junction endodeoxyribonuclease RuvC from Shewanella sp. (strain ANA-3).